The following is a 327-amino-acid chain: Annexin A8 (327 aa).

Annexin repeat units lie at residues Phe21–Tyr92, Pro93–Gln164, Gly177–Lys249, and Asn253–Gly324. Met266, Gly268, Gly270, and Asp310 together coordinate Ca(2+).

The protein belongs to the annexin family.

This protein is an anticoagulant protein that acts as an indirect inhibitor of the thromboplastin-specific complex, which is involved in the blood coagulation cascade. In Bos taurus (Bovine), this protein is Annexin A8 (ANXA8).